A 381-amino-acid polypeptide reads, in one-letter code: E3 ubiquitin-protein ligase At1g63170 (381 aa).

A disordered region spans residues 1-23; the sequence is MSRETTTEATPLILTDGGGGRRS. 2 consecutive transmembrane segments (helical) span residues 74–94 and 107–127; these read VVVLDFVWNLAFVVVATAVLV and VWIIGYGLQCMMHMVCVCVEY. Residues 135–161 are disordered; sequence RRDLSPRSSSSSSSSSSSMDEEEGLGL. A compositionally biased stretch (low complexity) spans 140-152; it reads PRSSSSSSSSSSS. A coiled-coil region spans residues 170–194; the sequence is LELGQLENENNSFAKHLESANTMIS. 3 consecutive transmembrane segments (helical) span residues 189-209, 224-244, and 245-265; these read ANTMISFIWWVIGFYWVSSGG, IVFLGFDVFFVVFCVALACVI, and GIAVCCCLPCIIAVLYAVAEQ. The segment at 325–366 adopts an RING-type; atypical zinc-finger fold; it reads CCICLSAYEDETELRELPCGHHFHCGCVDKWLYINATCPLCK.

The protein localises to the membrane. The catalysed reaction is S-ubiquitinyl-[E2 ubiquitin-conjugating enzyme]-L-cysteine + [acceptor protein]-L-lysine = [E2 ubiquitin-conjugating enzyme]-L-cysteine + N(6)-ubiquitinyl-[acceptor protein]-L-lysine.. The protein operates within protein modification; protein ubiquitination. In terms of biological role, mediates E2-dependent protein ubiquitination. The protein is E3 ubiquitin-protein ligase At1g63170 of Arabidopsis thaliana (Mouse-ear cress).